The following is a 328-amino-acid chain: Cytochrome c biogenesis protein CcsA (328 aa).

8 consecutive transmembrane segments (helical) span residues 15-35 (FLVLFLTMLVYWAGAAFPSIP), 36-56 (LLPGLGSTGVAIANLCIAALL), 68-88 (ISNLYESLFFLAWGVTAVHLI), 97-117 (LVGVVTTPVAMGITAFATLSL), 142-162 (VMMLSYAALMVGSLMAIAFLI), 236-256 (VIGLGFPLLTIGIIAGAVWAN), 263-283 (WSWDPKETWALITWLVFAAYL), and 297-317 (AILAASGFVVVWVCYLGVNLL).

The protein belongs to the CcmF/CycK/Ccl1/NrfE/CcsA family. As to quaternary structure, may interact with ccs1.

The protein resides in the cellular thylakoid membrane. In terms of biological role, required during biogenesis of c-type cytochromes (cytochrome c6 and cytochrome f) at the step of heme attachment. The polypeptide is Cytochrome c biogenesis protein CcsA (Microcystis aeruginosa (strain NIES-843 / IAM M-2473)).